A 461-amino-acid chain; its full sequence is Gram-negative bacteria-binding protein 2 (461 aa).

The first 20 residues, 1 to 20, serve as a signal peptide directing secretion; the sequence is MRWEFLPCLLLLISNNKIFG. One can recognise a CBM39 domain in the interval 21–115; sequence FKVPSINFEM…TRVIINTRLL (95 aa). Residues Asn71, Asn170, Asn177, and Asn364 are each glycosylated (N-linked (GlcNAc...) asparagine). One can recognise a GH16 domain in the interval 179-461; that stretch reads TTWKHDIRQR…VIDYVRVYAE (283 aa).

Belongs to the insect beta-1,3-glucan binding protein family.

It localises to the secreted. Functionally, involved in the recognition of invading microorganisms. Binds specifically to beta-1,3-glucan and activates the phenoloxidase cascade. This Drosophila melanogaster (Fruit fly) protein is Gram-negative bacteria-binding protein 2.